The sequence spans 228 residues: Cytidylate kinase (228 aa).

17 to 25 (GPSASGKGT) is a binding site for ATP.

This sequence belongs to the cytidylate kinase family. Type 1 subfamily.

The protein localises to the cytoplasm. It carries out the reaction CMP + ATP = CDP + ADP. It catalyses the reaction dCMP + ATP = dCDP + ADP. The polypeptide is Cytidylate kinase (Paraburkholderia xenovorans (strain LB400)).